The primary structure comprises 305 residues: Serine/threonine-protein phosphatase 4 catalytic subunit (305 aa).

Positions 52, 54, 80, and 112 each coordinate Mn(2+). Histidine 113 serves as the catalytic Proton donor. Mn(2+) contacts are provided by histidine 162 and histidine 236.

The protein belongs to the PPP phosphatase family. PP-4 (PP-X) subfamily. Serine/threonine-protein phosphatase 4 (PP4) occurs in different assemblies of the catalytic and one or more regulatory subunits. Probably part of a PP4 complex containing ppp4c and ppp4r2. Interacts with smkA. Mn(2+) serves as cofactor.

It localises to the cytoplasm. The protein resides in the nucleus. It catalyses the reaction O-phospho-L-seryl-[protein] + H2O = L-seryl-[protein] + phosphate. The catalysed reaction is O-phospho-L-threonyl-[protein] + H2O = L-threonyl-[protein] + phosphate. Its function is as follows. Required for development, chemotaxis and the expression of numerous genes. The polypeptide is Serine/threonine-protein phosphatase 4 catalytic subunit (ppp4c) (Dictyostelium discoideum (Social amoeba)).